Reading from the N-terminus, the 251-residue chain is ATP synthase subunit a (251 aa).

The next 5 helical transmembrane spans lie at Val-34–Ser-54, Phe-93–Phe-113, Ile-130–Ser-150, Leu-195–Leu-215, and Gly-216–Gly-236.

Belongs to the ATPase A chain family. In terms of assembly, F-type ATPases have 2 components, CF(1) - the catalytic core - and CF(0) - the membrane proton channel. CF(1) has five subunits: alpha(3), beta(3), gamma(1), delta(1), epsilon(1). CF(0) has four main subunits: a, b, b' and c.

It is found in the cellular thylakoid membrane. In terms of biological role, key component of the proton channel; it plays a direct role in the translocation of protons across the membrane. The chain is ATP synthase subunit a from Nostoc sp. (strain PCC 7120 / SAG 25.82 / UTEX 2576).